The primary structure comprises 361 residues: Chorismate synthase (361 aa).

Positions 48 and 54 each coordinate NADP(+). FMN contacts are provided by residues 125–127, 238–239, G278, 293–297, and R319; these read RSS, NA, and KPTSS.

Belongs to the chorismate synthase family. Homotetramer. It depends on FMNH2 as a cofactor.

The catalysed reaction is 5-O-(1-carboxyvinyl)-3-phosphoshikimate = chorismate + phosphate. It participates in metabolic intermediate biosynthesis; chorismate biosynthesis; chorismate from D-erythrose 4-phosphate and phosphoenolpyruvate: step 7/7. In terms of biological role, catalyzes the anti-1,4-elimination of the C-3 phosphate and the C-6 proR hydrogen from 5-enolpyruvylshikimate-3-phosphate (EPSP) to yield chorismate, which is the branch point compound that serves as the starting substrate for the three terminal pathways of aromatic amino acid biosynthesis. This reaction introduces a second double bond into the aromatic ring system. The chain is Chorismate synthase from Proteus mirabilis (strain HI4320).